The chain runs to 808 residues: Ribosome biogenesis protein BOP1 homolog (808 aa).

The tract at residues 1-56 (MTSPKGKPSPKRSAPAPTTAALTPRTEERTEGATSSASASASSHISSSFDSPRDDT) is disordered. 2 stretches are compositionally biased toward low complexity: residues 12 to 24 (RSAP…ALTP) and 33 to 50 (ATSS…SSFD). WD repeat units follow at residues 430 to 469 (GHTA…LMKR), 640 to 680 (KFSE…RRFK), 682 to 720 (SGGV…KPYK), 724 to 766 (SHRG…DYNK), and 777 to 808 (KHQR…AWTE).

Belongs to the WD repeat BOP1/ERB1 family.

It localises to the nucleus. The protein resides in the nucleolus. Its subcellular location is the nucleoplasm. Its function is as follows. Required for maturation of ribosomal RNAs and formation of the large ribosomal subunit. The chain is Ribosome biogenesis protein BOP1 homolog from Leishmania infantum.